The sequence spans 276 residues: 2-dehydro-3-deoxyphosphooctonate aldolase (276 aa).

Belongs to the KdsA family.

The protein resides in the cytoplasm. It catalyses the reaction D-arabinose 5-phosphate + phosphoenolpyruvate + H2O = 3-deoxy-alpha-D-manno-2-octulosonate-8-phosphate + phosphate. It functions in the pathway carbohydrate biosynthesis; 3-deoxy-D-manno-octulosonate biosynthesis; 3-deoxy-D-manno-octulosonate from D-ribulose 5-phosphate: step 2/3. The protein operates within bacterial outer membrane biogenesis; lipopolysaccharide biosynthesis. The sequence is that of 2-dehydro-3-deoxyphosphooctonate aldolase from Xanthomonas axonopodis pv. citri (strain 306).